The primary structure comprises 395 residues: Chorismate synthase (395 aa).

Position 48 (Arg48) interacts with NADP(+). Residue 125–127 (RSS) participates in FMN binding. The segment at 264 to 292 (RNEDWTFDDGESFDHVESEEGDPVPVGND) is disordered. Residues Gly298, 313 to 317 (HAPTS), and Arg340 contribute to the FMN site. Positions 373-395 (PDRVDGNPGQYDTDYHPSSPDND) are disordered.

Belongs to the chorismate synthase family. It depends on FMNH2 as a cofactor.

The enzyme catalyses 5-O-(1-carboxyvinyl)-3-phosphoshikimate = chorismate + phosphate. Its pathway is metabolic intermediate biosynthesis; chorismate biosynthesis; chorismate from D-erythrose 4-phosphate and phosphoenolpyruvate: step 7/7. Its function is as follows. Catalyzes the anti-1,4-elimination of the C-3 phosphate and the C-6 proR hydrogen from 5-enolpyruvylshikimate-3-phosphate (EPSP) to yield chorismate, which is the branch point compound that serves as the starting substrate for the three terminal pathways of aromatic amino acid biosynthesis. This reaction introduces a second double bond into the aromatic ring system. The protein is Chorismate synthase of Halorubrum lacusprofundi (strain ATCC 49239 / DSM 5036 / JCM 8891 / ACAM 34).